The sequence spans 49 residues: U6-myrmicitoxin-Mri1a (49 aa).

Positions 1-27 (MNPKALCSFLLATFLLLTVTIMPSVHA) are cleaved as a signal peptide. The propeptide occupies 28–35 (NAEANADA).

In terms of processing, contains 1 disulfide bond. Expressed by the venom gland.

The protein resides in the secreted. The sequence is that of U6-myrmicitoxin-Mri1a from Manica rubida (European giant red ant).